We begin with the raw amino-acid sequence, 674 residues long: DNA ligase (674 aa).

NAD(+)-binding positions include 35-39 (DYDFD), 84-85 (SL), and Glu-118. The active-site N6-AMP-lysine intermediate is the Lys-120. NAD(+) is bound by residues Arg-141, Glu-184, Lys-297, and Lys-321. The Zn(2+) site is built by Cys-415, Cys-418, Cys-433, and Cys-439. A BRCT domain is found at 598–674 (LVNTNFEGLT…ITEDEFDALL (77 aa)).

Belongs to the NAD-dependent DNA ligase family. LigA subfamily. Mg(2+) serves as cofactor. Mn(2+) is required as a cofactor.

The enzyme catalyses NAD(+) + (deoxyribonucleotide)n-3'-hydroxyl + 5'-phospho-(deoxyribonucleotide)m = (deoxyribonucleotide)n+m + AMP + beta-nicotinamide D-nucleotide.. Its function is as follows. DNA ligase that catalyzes the formation of phosphodiester linkages between 5'-phosphoryl and 3'-hydroxyl groups in double-stranded DNA using NAD as a coenzyme and as the energy source for the reaction. It is essential for DNA replication and repair of damaged DNA. This chain is DNA ligase, found in Chlorobium phaeovibrioides (strain DSM 265 / 1930) (Prosthecochloris vibrioformis (strain DSM 265)).